The primary structure comprises 162 residues: Sec-independent protein translocase protein TatB (162 aa).

The helical transmembrane segment at 1-21 (MFDIGFLEIIVIMVIALIVIG) threads the bilayer. A disordered region spans residues 86 to 162 (IQDEFGIDQE…ESTPESSNKS (77 aa)). Residues 108–117 (FSGTQFNKAP) are compositionally biased toward polar residues. Positions 123 to 135 (PTTEESPSSTPET) are enriched in low complexity. Polar residues predominate over residues 147–162 (DVSAPSESTPESSNKS).

Belongs to the TatB family. As to quaternary structure, the Tat system comprises two distinct complexes: a TatABC complex, containing multiple copies of TatA, TatB and TatC subunits, and a separate TatA complex, containing only TatA subunits. Substrates initially bind to the TatABC complex, which probably triggers association of the separate TatA complex to form the active translocon.

It localises to the cell inner membrane. Functionally, part of the twin-arginine translocation (Tat) system that transports large folded proteins containing a characteristic twin-arginine motif in their signal peptide across membranes. Together with TatC, TatB is part of a receptor directly interacting with Tat signal peptides. TatB may form an oligomeric binding site that transiently accommodates folded Tat precursor proteins before their translocation. The polypeptide is Sec-independent protein translocase protein TatB (Hydrogenovibrio crunogenus (strain DSM 25203 / XCL-2) (Thiomicrospira crunogena)).